We begin with the raw amino-acid sequence, 539 residues long: Ell-associated factor Eaf (539 aa).

The interval 119–539 (TRSEMTHHKP…SSNSSDDDDD (421 aa)) is disordered. Residues 132–146 (PATNINHNNIPMSTN) show a composition bias toward polar residues. A compositionally biased stretch (pro residues) spans 151 to 163 (GPGPGPGSGPSPP). Residues 174-195 (KLENSTMRISSKTKVSTGSRRN) show a composition bias toward polar residues. A Phosphoserine modification is found at serine 205. Polar residues predominate over residues 220–238 (RSPQSAPAWNANNAQQTLP). Low complexity-rich tracts occupy residues 267-278 (SGSSTGSSTGQP), 309-337 (MHQNHQQHPSPPMHQQQQQQQQQQHYGRG), and 345-375 (NNYAQQQQPQQHHQQQEQQRPSSSSTYSHHS). Positions 420–435 (DSSDSDSGSESDDSTD) are enriched in acidic residues. Low complexity-rich tracts occupy residues 461 to 493 (HQQLQQQPPQQQQQQQQQQQYNHHMQQQHQPQQ) and 520 to 533 (NDLLQNDLQLSSNS).

This sequence belongs to the EAF family.

The protein resides in the nucleus. In terms of biological role, promotes transcriptional elongation by Su(Tpl)/ELL. Essential for development. This Drosophila willistoni (Fruit fly) protein is Ell-associated factor Eaf.